The following is a 2694-amino-acid chain: Neurobeachin-like protein 1 (2694 aa).

Disordered regions lie at residues 1289-1314 (VLMK…TDEE), 1330-1350 (SLED…DSSV), and 1381-1411 (CEMS…SVHS). Over residues 1290-1314 (LMKDNDKNMSTEDTKKNSDEKTDEE) the composition is skewed to basic and acidic residues. The segment covering 1383–1409 (MSDSGSQVPDSLPSTPSPVESTKSFSV) has biased composition (polar residues). The BEACH-type PH domain maps to 1883–1980 (DQKEKLVLME…VRNKIYSRLL (98 aa)). Residues 1992 to 2284 (RSPQELFKAS…QLLKEPHPPR (293 aa)) form the BEACH domain. 2 WD repeats span residues 2439-2478 (RHMD…GVPV) and 2490-2531 (GHTN…RTLR).

It belongs to the WD repeat neurobeachin family. In terms of tissue distribution, highly expressed in brain, kidney, prostate and testis. Weakly expressed in ovary, small intestine, colon and peripheral blood leukocytes. May be correlative to several tumors, such as ovary serous adenocarcinoma and metastasis mammary gland carcinoma breast.

This Homo sapiens (Human) protein is Neurobeachin-like protein 1 (NBEAL1).